Here is a 121-residue protein sequence, read N- to C-terminus: Large ribosomal subunit protein bL12 (121 aa).

Belongs to the bacterial ribosomal protein bL12 family. As to quaternary structure, homodimer. Part of the ribosomal stalk of the 50S ribosomal subunit. Forms a multimeric L10(L12)X complex, where L10 forms an elongated spine to which 2 to 4 L12 dimers bind in a sequential fashion. Binds GTP-bound translation factors.

Functionally, forms part of the ribosomal stalk which helps the ribosome interact with GTP-bound translation factors. Is thus essential for accurate translation. This Pseudomonas fluorescens (strain ATCC BAA-477 / NRRL B-23932 / Pf-5) protein is Large ribosomal subunit protein bL12.